A 296-amino-acid chain; its full sequence is Ribosome biogenesis GTPase A (296 aa).

One can recognise a CP-type G domain in the interval 14–178 (RRQVTEKLKL…LLDTPGILWP (165 aa)). GTP is bound by residues 58–61 (NKAD), 130–135 (NVGKST), and Gly-174.

It belongs to the TRAFAC class YlqF/YawG GTPase family. MTG1 subfamily. In terms of assembly, interacts with ctc. Interacts with the immature 50S ribosome subunit. 2 molecules of rbgA bind to one 50S subunit.

It localises to the cytoplasm. In terms of biological role, essential protein that is required for a late step of 50S ribosomal subunit assembly. Has GTPase activity that is stimulated by interaction with the immature 50S ribosome subunit. Binds to the 23S rRNA. Required for the association of ribosomal proteins rplP and rpmA with the large subunit. This is Ribosome biogenesis GTPase A from Bacillus cereus (strain ATCC 14579 / DSM 31 / CCUG 7414 / JCM 2152 / NBRC 15305 / NCIMB 9373 / NCTC 2599 / NRRL B-3711).